The chain runs to 133 residues: uncharacterized protein (133 aa).

Residues 11 to 31 (YFLISVFLIFIVSGITYFYST) traverse the membrane as a helical segment.

It localises to the membrane. This is an uncharacterized protein from Borreliella burgdorferi (strain ATCC 35210 / DSM 4680 / CIP 102532 / B31) (Borrelia burgdorferi).